Here is a 339-residue protein sequence, read N- to C-terminus: tRNA N6-adenosine threonylcarbamoyltransferase (339 aa).

Residues histidine 111 and histidine 115 each contribute to the Fe cation site. Residues 134 to 138, aspartate 167, glycine 180, and asparagine 272 contribute to the substrate site; that span reads LVSGG. Aspartate 300 is a binding site for Fe cation.

It belongs to the KAE1 / TsaD family. It depends on Fe(2+) as a cofactor.

The protein resides in the cytoplasm. The catalysed reaction is L-threonylcarbamoyladenylate + adenosine(37) in tRNA = N(6)-L-threonylcarbamoyladenosine(37) in tRNA + AMP + H(+). Required for the formation of a threonylcarbamoyl group on adenosine at position 37 (t(6)A37) in tRNAs that read codons beginning with adenine. Is involved in the transfer of the threonylcarbamoyl moiety of threonylcarbamoyl-AMP (TC-AMP) to the N6 group of A37, together with TsaE and TsaB. TsaD likely plays a direct catalytic role in this reaction. The sequence is that of tRNA N6-adenosine threonylcarbamoyltransferase from Sodalis glossinidius (strain morsitans).